The chain runs to 415 residues: Krueppel-like factor 15 (415 aa).

The short motif at 75-83 (SILDFLLSR) is the 9aaTAD element. The disordered stretch occupies residues 172–216 (LSAGSHRSHLHPESAGRERCTPPPGGTSGGGAQSAGEGPAHDGPV). A compositionally biased stretch (basic and acidic residues) spans 181-191 (LHPESAGRERC). C2H2-type zinc fingers lie at residues 320–344 (HKCT…LRRH), 350–374 (FACT…RRSH), and 380–402 (YQCP…IKVH).

The protein belongs to the Sp1 C2H2-type zinc-finger protein family. In terms of assembly, interacts with MYOCD. Interacts with EP300. In terms of tissue distribution, expressed in aortic smooth muscle cells.

The protein localises to the nucleus. Functionally, transcriptional regulator that binds to the GA element of the CLCNKA promoter. Binds to the KCNIP2 promoter and regulates KCNIP2 circadian expression in the heart. Is a repressor of CCN2 expression, involved in the control of cardiac fibrosis. Is also involved in the control of cardiac hypertrophy acting through the inhibition of MEF2A, GATA4 and MYOCD activity. Is a negative regulator of TP53 acetylation. Inhibits NF-kappa-B activation through repression of EP300-dependent RELA acetylation. Involved in podocyte differentiation. This Mus musculus (Mouse) protein is Krueppel-like factor 15 (Klf15).